The primary structure comprises 129 residues: Putative protein p14 (129 aa).

In Acyrthosiphon pisum secondary endosymbiont phage 1 (Bacteriophage APSE-1), this protein is Putative protein p14 (14).